Consider the following 100-residue polypeptide: Urease subunit gamma (100 aa).

It belongs to the urease gamma subunit family. Heterotrimer of UreA (gamma), UreB (beta) and UreC (alpha) subunits. Three heterotrimers associate to form the active enzyme.

Its subcellular location is the cytoplasm. It catalyses the reaction urea + 2 H2O + H(+) = hydrogencarbonate + 2 NH4(+). The protein operates within nitrogen metabolism; urea degradation; CO(2) and NH(3) from urea (urease route): step 1/1. The chain is Urease subunit gamma from Actinobacillus pleuropneumoniae serotype 5b (strain L20).